Consider the following 252-residue polypeptide: Phosphoglycolate phosphatase (252 aa).

Asp13 (nucleophile) is an active-site residue. The Mg(2+) site is built by Asp13, Asp15, and Asp192.

Belongs to the HAD-like hydrolase superfamily. CbbY/CbbZ/Gph/YieH family. As to quaternary structure, monomer. Mg(2+) is required as a cofactor. Requires chloride as cofactor.

The catalysed reaction is 2-phosphoglycolate + H2O = glycolate + phosphate. The protein operates within organic acid metabolism; glycolate biosynthesis; glycolate from 2-phosphoglycolate: step 1/1. In terms of biological role, specifically catalyzes the dephosphorylation of 2-phosphoglycolate. Is involved in the dissimilation of the intracellular 2-phosphoglycolate formed during the DNA repair of 3'-phosphoglycolate ends, a major class of DNA lesions induced by oxidative stress. This is Phosphoglycolate phosphatase from Shigella flexneri.